The sequence spans 1160 residues: AF4/FMR2 family member 4 (1160 aa).

The span at 1–19 (MNREDRNVLRMKERERRNQ) shows a compositional bias: basic and acidic residues. 4 disordered regions span residues 1–42 (MNRE…YKVT), 78–289 (PKPA…SKAH), 322–908 (WPPP…FDDR), and 1031–1070 (NSYS…SSGG). Residues 115-128 (PSTSQSQKRSSALQ) are compositionally biased toward polar residues. Position 120 is a phosphoserine (S120). Positions 172–189 (RSSSPGKPQAVSSLSSSH) are enriched in low complexity. The segment covering 193–212 (HGNDHHSKEHQRSKSPRDPD) has biased composition (basic and acidic residues). S207 carries the phosphoserine modification. Residues 229-247 (SSQSFPPSLMSKSSSMLQK) show a composition bias toward low complexity. 2 stretches are compositionally biased toward polar residues: residues 268–280 (EHYS…NSMT) and 360–370 (YSTAKTSNGHQ). Phosphoserine occurs at positions 382, 383, 384, and 387. The span at 398 to 407 (PRSTPGSNSE) shows a compositional bias: polar residues. The span at 408 to 424 (PSHHNSEGADNSRDDSS) shows a compositional bias: basic and acidic residues. Residues 425–457 (SHSGSESSSGSDSESESSSSDSEANEPSQSASP) show a composition bias toward low complexity. Phosphoserine is present on residues S482, S485, and S486. 3 stretches are compositionally biased toward polar residues: residues 483-496 (PASS…SSQA), 505-523 (GTAS…SSAT), and 544-555 (SPAQSDSTTQRR). Phosphoserine is present on S544. The span at 563 to 581 (KKPEKSAAEEPRGGLKIES) shows a compositional bias: basic and acidic residues. K578 participates in a covalent cross-link: Glycyl lysine isopeptide (Lys-Gly) (interchain with G-Cter in SUMO2). The segment covering 594–607 (SRHKAATKGSRKPN) has biased composition (basic residues). Basic and acidic residues predominate over residues 608 to 622 (IKKESKSSPRPTAEK). Over residues 641–657 (TDTSSSDSDGSESLPPS) the composition is skewed to low complexity. S666 is modified (phosphoserine). Phosphothreonine is present on T669. Residues S675, S689, S698, and S701 each carry the phosphoserine modification. At Y707 the chain carries Phosphotyrosine. Composition is skewed to basic and acidic residues over residues 725–756 (PYKE…EKAS), 764–784 (KNDD…DKNS), and 794–806 (ESSK…EKDL). Phosphoserine is present on S809. Residue K817 is modified to N6-acetyllysine. Residue S831 is modified to Phosphoserine. Low complexity-rich tracts occupy residues 831 to 859 (SQSS…SSTA) and 880 to 895 (PNSS…TSES). Phosphoserine occurs at positions 1040, 1052, 1055, and 1059. The segment covering 1059–1070 (SPGNSGSYSSGG) has biased composition (low complexity).

Belongs to the AF4 family. As to quaternary structure, component of the super elongation complex (SEC), at least composed of EAF1, EAF2, CDK9, MLLT3/AF9, AFF (AFF1 or AFF4), the P-TEFb complex and ELL (ELL, ELL2 or ELL3). Interacts with ELL2; the interaction is direct and leads to stabilize ELL2 and prevent ELL2 ubiquitination and degradation. Interacts with ELL3; the interaction is direct. Dephosphorylated at Ser-544 by the PNUTS-PP1 complex, promoting RNA polymerase II transcription pause-release. Highly expressed in testis by Sertoli cells, and at low levels in other tissues.

The protein resides in the nucleus. Its subcellular location is the chromosome. Key component of the super elongation complex (SEC), a complex required to increase the catalytic rate of RNA polymerase II transcription by suppressing transient pausing by the polymerase at multiple sites along the DNA. In the SEC complex, AFF4 acts as a central scaffold that recruits other factors through direct interactions with ELL proteins (ELL, ELL2 or ELL3) and the P-TEFb complex. This chain is AF4/FMR2 family member 4 (Aff4), found in Mus musculus (Mouse).